We begin with the raw amino-acid sequence, 207 residues long: ATP phosphoribosyltransferase (207 aa).

Belongs to the ATP phosphoribosyltransferase family. Short subfamily. As to quaternary structure, heteromultimer composed of HisG and HisZ subunits.

It is found in the cytoplasm. It carries out the reaction 1-(5-phospho-beta-D-ribosyl)-ATP + diphosphate = 5-phospho-alpha-D-ribose 1-diphosphate + ATP. Its pathway is amino-acid biosynthesis; L-histidine biosynthesis; L-histidine from 5-phospho-alpha-D-ribose 1-diphosphate: step 1/9. Functionally, catalyzes the condensation of ATP and 5-phosphoribose 1-diphosphate to form N'-(5'-phosphoribosyl)-ATP (PR-ATP). Has a crucial role in the pathway because the rate of histidine biosynthesis seems to be controlled primarily by regulation of HisG enzymatic activity. This chain is ATP phosphoribosyltransferase, found in Dictyoglomus thermophilum (strain ATCC 35947 / DSM 3960 / H-6-12).